A 59-amino-acid chain; its full sequence is Large ribosomal subunit protein uL30 (59 aa).

Belongs to the universal ribosomal protein uL30 family. Part of the 50S ribosomal subunit.

The chain is Large ribosomal subunit protein uL30 from Erwinia tasmaniensis (strain DSM 17950 / CFBP 7177 / CIP 109463 / NCPPB 4357 / Et1/99).